Here is a 183-residue protein sequence, read N- to C-terminus: GTP cyclohydrolase 1 (183 aa).

3 residues coordinate Zn(2+): Cys-71, His-74, and Cys-142.

This sequence belongs to the GTP cyclohydrolase I family. As to quaternary structure, toroid-shaped homodecamer, composed of two pentamers of five dimers.

It carries out the reaction GTP + H2O = 7,8-dihydroneopterin 3'-triphosphate + formate + H(+). It functions in the pathway cofactor biosynthesis; 7,8-dihydroneopterin triphosphate biosynthesis; 7,8-dihydroneopterin triphosphate from GTP: step 1/1. This Leptospira borgpetersenii serovar Hardjo-bovis (strain JB197) protein is GTP cyclohydrolase 1.